A 508-amino-acid polypeptide reads, in one-letter code: Photosystem II CP47 reaction center protein (508 aa).

6 helical membrane-spanning segments follow: residues 21 to 36 (AVHI…WAGS), 101 to 115 (IVFS…IWHW), 140 to 156 (GIHL…FGAF), 203 to 218 (IAAG…FHLS), 237 to 252 (VLSS…AFVV), and 457 to 472 (TFAL…HGAR).

This sequence belongs to the PsbB/PsbC family. PsbB subfamily. In terms of assembly, PSII is composed of 1 copy each of membrane proteins PsbA, PsbB, PsbC, PsbD, PsbE, PsbF, PsbH, PsbI, PsbJ, PsbK, PsbL, PsbM, PsbT, PsbX, PsbY, PsbZ, Psb30/Ycf12, at least 3 peripheral proteins of the oxygen-evolving complex and a large number of cofactors. It forms dimeric complexes. It depends on Binds multiple chlorophylls. PSII binds additional chlorophylls, carotenoids and specific lipids. as a cofactor.

The protein localises to the plastid. It is found in the chloroplast thylakoid membrane. In terms of biological role, one of the components of the core complex of photosystem II (PSII). It binds chlorophyll and helps catalyze the primary light-induced photochemical processes of PSII. PSII is a light-driven water:plastoquinone oxidoreductase, using light energy to abstract electrons from H(2)O, generating O(2) and a proton gradient subsequently used for ATP formation. The chain is Photosystem II CP47 reaction center protein from Agrostis stolonifera (Creeping bentgrass).